The following is a 122-amino-acid chain: Large ribosomal subunit protein uL14 (122 aa).

Belongs to the universal ribosomal protein uL14 family. As to quaternary structure, part of the 50S ribosomal subunit. Forms a cluster with proteins L3 and L19. In the 70S ribosome, L14 and L19 interact and together make contacts with the 16S rRNA in bridges B5 and B8.

In terms of biological role, binds to 23S rRNA. Forms part of two intersubunit bridges in the 70S ribosome. This is Large ribosomal subunit protein uL14 from Janthinobacterium sp. (strain Marseille) (Minibacterium massiliensis).